Here is a 230-residue protein sequence, read N- to C-terminus: Thymidylate kinase (230 aa).

ATP is bound at residue 23–30 (GIDGAGKT).

The protein belongs to the thymidylate kinase family.

The catalysed reaction is dTMP + ATP = dTDP + ADP. Phosphorylation of dTMP to form dTDP in both de novo and salvage pathways of dTTP synthesis. This is Thymidylate kinase from Ureaplasma parvum serovar 3 (strain ATCC 27815 / 27 / NCTC 11736).